The primary structure comprises 272 residues: 3-methyl-2-oxobutanoate hydroxymethyltransferase (272 aa).

Mg(2+) contacts are provided by D43 and D82. 3-methyl-2-oxobutanoate contacts are provided by residues D43–S44, D82, and K112. E114 is a Mg(2+) binding site. The active-site Proton acceptor is E179.

This sequence belongs to the PanB family. As to quaternary structure, homodecamer; pentamer of dimers. Requires Mg(2+) as cofactor.

The protein localises to the cytoplasm. It carries out the reaction 3-methyl-2-oxobutanoate + (6R)-5,10-methylene-5,6,7,8-tetrahydrofolate + H2O = 2-dehydropantoate + (6S)-5,6,7,8-tetrahydrofolate. The protein operates within cofactor biosynthesis; (R)-pantothenate biosynthesis; (R)-pantoate from 3-methyl-2-oxobutanoate: step 1/2. In terms of biological role, catalyzes the reversible reaction in which hydroxymethyl group from 5,10-methylenetetrahydrofolate is transferred onto alpha-ketoisovalerate to form ketopantoate. The polypeptide is 3-methyl-2-oxobutanoate hydroxymethyltransferase (Staphylococcus aureus (strain JH1)).